The sequence spans 466 residues: GTPase Der (466 aa).

EngA-type G domains lie at 30–193 (PVVA…PEVS) and 203–376 (RRVA…ASWD). Residues 36–43 (GRPNVGKS), 83–87 (DTGGW), 145–148 (NKVD), 209–216 (GKPNVGKS), 256–260 (DTAGL), and 321–324 (NKWD) each bind GTP. The KH-like domain maps to 377-459 (TRIATGPLNS…PIRINVRVRE (83 aa)).

Belongs to the TRAFAC class TrmE-Era-EngA-EngB-Septin-like GTPase superfamily. EngA (Der) GTPase family. Associates with the 50S ribosomal subunit.

GTPase that plays an essential role in the late steps of ribosome biogenesis. In Mycolicibacterium paratuberculosis (strain ATCC BAA-968 / K-10) (Mycobacterium paratuberculosis), this protein is GTPase Der.